Reading from the N-terminus, the 276-residue chain is Probable endonuclease 4 (276 aa).

H67, H107, E142, D176, H179, H211, D224, H226, and E256 together coordinate Zn(2+).

Belongs to the AP endonuclease 2 family. Zn(2+) is required as a cofactor.

It carries out the reaction Endonucleolytic cleavage to 5'-phosphooligonucleotide end-products.. Functionally, endonuclease IV plays a role in DNA repair. It cleaves phosphodiester bonds at apurinic or apyrimidinic (AP) sites, generating a 3'-hydroxyl group and a 5'-terminal sugar phosphate. This Methanosphaera stadtmanae (strain ATCC 43021 / DSM 3091 / JCM 11832 / MCB-3) protein is Probable endonuclease 4.